Consider the following 150-residue polypeptide: Large ribosomal subunit protein bL9 (150 aa).

The protein belongs to the bacterial ribosomal protein bL9 family.

In terms of biological role, binds to the 23S rRNA. The chain is Large ribosomal subunit protein bL9 from Shewanella frigidimarina (strain NCIMB 400).